The sequence spans 238 residues: Urease accessory protein UreF (238 aa).

This sequence belongs to the UreF family. As to quaternary structure, ureD, UreF and UreG form a complex that acts as a GTP-hydrolysis-dependent molecular chaperone, activating the urease apoprotein by helping to assemble the nickel containing metallocenter of UreC. The UreE protein probably delivers the nickel.

The protein localises to the cytoplasm. Required for maturation of urease via the functional incorporation of the urease nickel metallocenter. The polypeptide is Urease accessory protein UreF (Delftia acidovorans (strain DSM 14801 / SPH-1)).